The primary structure comprises 248 residues: Probable uridine-cytidine kinase (248 aa).

Residue 15-23 (GGTSCGKST) coordinates ATP. Substrate contacts are provided by Asp73, Tyr101, Arg154, Arg164, and Gln172. Asp201 serves as a coordination point for ATP. Residues 224 to 248 (SDEEEEKENELVKQGSFRRPFSRPH) are disordered.

It belongs to the uridine kinase family.

It carries out the reaction uridine + ATP = UMP + ADP + H(+). The catalysed reaction is cytidine + ATP = CMP + ADP + H(+). The protein operates within pyrimidine metabolism; CTP biosynthesis via salvage pathway; CTP from cytidine: step 1/3. It participates in pyrimidine metabolism; UMP biosynthesis via salvage pathway; UMP from uridine: step 1/1. In Caenorhabditis elegans, this protein is Probable uridine-cytidine kinase.